The sequence spans 298 residues: 4-hydroxy-tetrahydrodipicolinate synthase (298 aa).

Position 51 (T51) interacts with pyruvate. Residue Y139 is the Proton donor/acceptor of the active site. K167 acts as the Schiff-base intermediate with substrate in catalysis. Pyruvate is bound at residue I209.

Belongs to the DapA family. In terms of assembly, homotetramer; dimer of dimers.

It localises to the cytoplasm. It catalyses the reaction L-aspartate 4-semialdehyde + pyruvate = (2S,4S)-4-hydroxy-2,3,4,5-tetrahydrodipicolinate + H2O + H(+). The protein operates within amino-acid biosynthesis; L-lysine biosynthesis via DAP pathway; (S)-tetrahydrodipicolinate from L-aspartate: step 3/4. Catalyzes the condensation of (S)-aspartate-beta-semialdehyde [(S)-ASA] and pyruvate to 4-hydroxy-tetrahydrodipicolinate (HTPA). The protein is 4-hydroxy-tetrahydrodipicolinate synthase of Haemophilus influenzae (strain PittGG).